A 743-amino-acid polypeptide reads, in one-letter code: Probable TonB-dependent siderophore receptor PiuA (743 aa).

An N-terminal signal peptide occupies residues 1-28 (MSLIRTRKKIVSSAIASSLSMIATTAMA). In terms of domain architecture, TBDR plug spans 61–167 (PLLDTPKSVS…VGGSINMISK (107 aa)). The TBDR beta-barrel domain maps to 172-743 (GDFLEGSVAA…SAVLAVNFKY (572 aa)). 2 disulfide bridges follow: cysteine 408-cysteine 416 and cysteine 627-cysteine 632.

The protein belongs to the TonB-dependent receptor family.

The protein resides in the cell outer membrane. Functionally, probably involved in the initial step of iron uptake by binding iron chelating siderophores, thereby allowing extraction of iron from the environment. May bind the siderophore, ferric enterobactin, with micromolar affinity. This chain is Probable TonB-dependent siderophore receptor PiuA, found in Acinetobacter baumannii (strain ATCC 19606 / DSM 30007 / JCM 6841 / CCUG 19606 / CIP 70.34 / NBRC 109757 / NCIMB 12457 / NCTC 12156 / 81).